A 179-amino-acid polypeptide reads, in one-letter code: Mediator of RNA polymerase II transcription subunit 29 (179 aa).

It belongs to the Mediator complex subunit 29 family. As to quaternary structure, component of the Mediator complex.

The protein localises to the nucleus. Component of the Mediator complex, a coactivator involved in the regulated transcription of nearly all RNA polymerase II-dependent genes. Mediator functions as a bridge to convey information from gene-specific regulatory proteins to the basal RNA polymerase II transcription machinery. Mediator is recruited to promoters by direct interactions with regulatory proteins and serves as a scaffold for the assembly of a functional preinitiation complex with RNA polymerase II and the general transcription factors. The polypeptide is Mediator of RNA polymerase II transcription subunit 29 (med29) (Danio rerio (Zebrafish)).